We begin with the raw amino-acid sequence, 785 residues long: Polyribonucleotide nucleotidyltransferase (785 aa).

Mg(2+)-binding residues include Asp-516 and Asp-522. The 60-residue stretch at 582–641 (PRVTTVKIPVDKIGMVIGPKGQTINAIQDETGAEISIEDDGTIYVGATNGPAAQAAVERI) folds into the KH domain. The S1 motif domain occupies 653–722 (GDRFLGTVVK…QRGKIYLDKV (70 aa)). The interval 722–785 (VRPEGAEAPA…SRPRRRTRRS (64 aa)) is disordered. Residues 734–764 (AAERPAGRDRGDRGPRDRGDRGGRGPDRGDS) are compositionally biased toward basic and acidic residues.

Belongs to the polyribonucleotide nucleotidyltransferase family. Mg(2+) is required as a cofactor.

It is found in the cytoplasm. The catalysed reaction is RNA(n+1) + phosphate = RNA(n) + a ribonucleoside 5'-diphosphate. In terms of biological role, involved in mRNA degradation. Catalyzes the phosphorolysis of single-stranded polyribonucleotides processively in the 3'- to 5'-direction. This chain is Polyribonucleotide nucleotidyltransferase, found in Salinispora tropica (strain ATCC BAA-916 / DSM 44818 / JCM 13857 / NBRC 105044 / CNB-440).